A 269-amino-acid chain; its full sequence is Cell cycle regulator CcrZ (269 aa).

Positions 39, 76, 77, 78, and 80 each coordinate ATP. Positions 164–171 (HCDVNHNN) match the Brenner's motif [HXDhX3N] motif. Aspartate 166 (proton acceptor) is an active-site residue. Positions 180–203 (LYLIDWDGAMIADPAMDLGPLLYH) match the APH motif.

Belongs to the aminoglycoside phosphotransferase family. Monomer in solution. Interacts with DnaA (via domains I (1-82) and III (111-326)). Interacts with DnaB. Interacts with FtsZ.

The protein localises to the cytoplasm. The enzyme catalyses D-ribose + ATP = D-ribose 5-phosphate + ADP + H(+). It carries out the reaction 2-deoxy-D-ribose + ATP = 2-deoxy-D-ribose 5-phosphate + ADP + H(+). With respect to regulation, activated by D-ribose and 2-deoxy-D-ribose. Slightly activated by kanamycin and gentamicin. Functionally, plays a role in cell cycle regulation and chromosome integrity. Activates DnaA-dependent chromosomal DNA replication initiation ensuring that the chromosome is replicated at the right time during the cell cycle. May regulate replication initiation through phosphorylation of a possible second messenger or metabolite, and by interacting with replication initiation proteins. Has ATPase activity with D-ribose and 2-deoxy-D-ribose in vitro, but not with choline. Involved in DNA damage response. The protein is Cell cycle regulator CcrZ of Bacillus subtilis (strain 168).